A 76-amino-acid chain; its full sequence is MVKFQIKKGDKVQVIAGDDKGKVAEVIKVMPKSSQVIVAGCKVAKKSVKPSEQNPKGGFVNKEMPIHISNVKKVEA.

The protein belongs to the universal ribosomal protein uL24 family. In terms of assembly, part of the 50S ribosomal subunit.

Functionally, one of two assembly initiator proteins, it binds directly to the 5'-end of the 23S rRNA, where it nucleates assembly of the 50S subunit. In terms of biological role, one of the proteins that surrounds the polypeptide exit tunnel on the outside of the subunit. This Wolinella succinogenes (strain ATCC 29543 / DSM 1740 / CCUG 13145 / JCM 31913 / LMG 7466 / NCTC 11488 / FDC 602W) (Vibrio succinogenes) protein is Large ribosomal subunit protein uL24.